Reading from the N-terminus, the 330-residue chain is Pyridoxal 5'-phosphate synthase subunit PdxS (330 aa).

A D-ribose 5-phosphate-binding site is contributed by D23. K80 functions as the Schiff-base intermediate with D-ribose 5-phosphate in the catalytic mechanism. G152 is a binding site for D-ribose 5-phosphate. D-glyceraldehyde 3-phosphate is bound at residue R164. D-ribose 5-phosphate-binding positions include G250 and 271 to 272 (GS).

The protein belongs to the PdxS/SNZ family. In terms of assembly, in the presence of PdxT, forms a dodecamer of heterodimers.

The enzyme catalyses aldehydo-D-ribose 5-phosphate + D-glyceraldehyde 3-phosphate + L-glutamine = pyridoxal 5'-phosphate + L-glutamate + phosphate + 3 H2O + H(+). Its pathway is cofactor biosynthesis; pyridoxal 5'-phosphate biosynthesis. In terms of biological role, catalyzes the formation of pyridoxal 5'-phosphate from ribose 5-phosphate (RBP), glyceraldehyde 3-phosphate (G3P) and ammonia. The ammonia is provided by the PdxT subunit. Can also use ribulose 5-phosphate and dihydroxyacetone phosphate as substrates, resulting from enzyme-catalyzed isomerization of RBP and G3P, respectively. The sequence is that of Pyridoxal 5'-phosphate synthase subunit PdxS from Methanocaldococcus jannaschii (strain ATCC 43067 / DSM 2661 / JAL-1 / JCM 10045 / NBRC 100440) (Methanococcus jannaschii).